Reading from the N-terminus, the 375-residue chain is Growth/differentiation factor 8 (375 aa).

The signal sequence occupies residues 1–23; sequence MQKLQIYVYIYLFMLIVAGPVDL. The propeptide occupies 24–266; the sequence is NENSEQKENV…VTDTPKRSRR (243 aa). Asn71 carries an N-linked (GlcNAc...) asparagine glycan. Intrachain disulfides connect Cys272–Cys282, Cys281–Cys340, Cys309–Cys372, and Cys313–Cys374.

This sequence belongs to the TGF-beta family. As to quaternary structure, homodimer; disulfide-linked. Interacts with WFIKKN2, leading to inhibit its activity. Interacts with FSTL3. In terms of processing, synthesized as large precursor molecule that undergoes proteolytic cleavage to generate an N-terminal propeptide and a disulfide linked C-terminal dimer, which is the biologically active molecule. The circulating form consists of a latent complex of the C-terminal dimer and other proteins, including its propeptide, which maintain the C-terminal dimer in a latent, inactive state. Ligand activation requires additional cleavage of the prodomain by a tolloid-like metalloproteinase.

It is found in the secreted. Its function is as follows. Acts specifically as a negative regulator of skeletal muscle growth. The polypeptide is Growth/differentiation factor 8 (MSTN) (Sus scrofa (Pig)).